The primary structure comprises 195 residues: Putative CheY-P phosphatase CheC1 (195 aa).

The protein belongs to the CheC family.

Its function is as follows. Catalyzes the dephosphorylation of CheY-P. This chain is Putative CheY-P phosphatase CheC1 (cheC1), found in Halobacterium salinarum (strain ATCC 29341 / DSM 671 / R1).